A 516-amino-acid chain; its full sequence is Cytochrome P450 1A2 (516 aa).

A glycan (O-linked (GlcNAc) serine) is linked at Ser69. Phe226 provides a ligand contact to substrate. Cys458 contributes to the heme binding site.

Belongs to the cytochrome P450 family. In terms of assembly, interacts with PGRMC1; the interaction requires PGRMC1 homodimerization. The cofactor is heme. Liver.

The protein resides in the endoplasmic reticulum membrane. The protein localises to the microsome membrane. The catalysed reaction is an organic molecule + reduced [NADPH--hemoprotein reductase] + O2 = an alcohol + oxidized [NADPH--hemoprotein reductase] + H2O + H(+). It catalyses the reaction 17beta-estradiol + reduced [NADPH--hemoprotein reductase] + O2 = 2-hydroxy-17beta-estradiol + oxidized [NADPH--hemoprotein reductase] + H2O + H(+). The enzyme catalyses 17beta-estradiol + reduced [NADPH--hemoprotein reductase] + O2 = 4-hydroxy-17beta-estradiol + oxidized [NADPH--hemoprotein reductase] + H2O + H(+). It carries out the reaction estrone + reduced [NADPH--hemoprotein reductase] + O2 = 2-hydroxyestrone + oxidized [NADPH--hemoprotein reductase] + H2O + H(+). The catalysed reaction is estrone + reduced [NADPH--hemoprotein reductase] + O2 = 4-hydroxyestrone + oxidized [NADPH--hemoprotein reductase] + H2O + H(+). It catalyses the reaction cholesterol + reduced [NADPH--hemoprotein reductase] + O2 = 25-hydroxycholesterol + oxidized [NADPH--hemoprotein reductase] + H2O + H(+). The enzyme catalyses all-trans-retinol + reduced [NADPH--hemoprotein reductase] + O2 = all-trans-retinal + oxidized [NADPH--hemoprotein reductase] + 2 H2O + H(+). It carries out the reaction all-trans-retinal + reduced [NADPH--hemoprotein reductase] + O2 = all-trans-retinoate + oxidized [NADPH--hemoprotein reductase] + H2O + 2 H(+). The catalysed reaction is (5Z,8Z,11Z,14Z)-eicosatetraenoate + reduced [NADPH--hemoprotein reductase] + O2 = (14R,15S)-epoxy-(5Z,8Z,11Z)-eicosatrienoate + oxidized [NADPH--hemoprotein reductase] + H2O + H(+). It catalyses the reaction (5Z,8Z,11Z,14Z)-eicosatetraenoate + reduced [NADPH--hemoprotein reductase] + O2 = (14S,15R)-epoxy-(5Z,8Z,11Z)-eicosatrienoate + oxidized [NADPH--hemoprotein reductase] + H2O + H(+). The enzyme catalyses (5Z,8Z,11Z,14Z,17Z)-eicosapentaenoate + reduced [NADPH--hemoprotein reductase] + O2 = (17R,18S)-epoxy-(5Z,8Z,11Z,14Z)-eicosatetraenoate + oxidized [NADPH--hemoprotein reductase] + H2O + H(+). It carries out the reaction (4Z,7Z,10Z,13Z,16Z,19Z)-docosahexaenoate + reduced [NADPH--hemoprotein reductase] + O2 = (19R,20S)-epoxy-(4Z,7Z,10Z,13Z,16Z)-docosapentaenoate + oxidized [NADPH--hemoprotein reductase] + H2O + H(+). The catalysed reaction is (5S)-hydroperoxy-(6E,8Z,11Z,14Z)-eicosatetraenoate = 5-oxo-(6E,8Z,11Z,14Z)-eicosatetraenoate + H2O. It catalyses the reaction (12S)-hydroperoxy-(5Z,8Z,10E,14Z)-eicosatetraenoate = 12-oxo-(5Z,8Z,10E,14Z)-eicosatetraenoate + H2O. The enzyme catalyses (15S)-hydroperoxy-(5Z,8Z,11Z,13E)-eicosatetraenoate = 15-oxo-(5Z,8Z,11Z,13E)-eicosatetraenoate + H2O. It carries out the reaction (13S)-hydroperoxy-(9Z,11E)-octadecadienoate = 13-oxo-(9Z,11E)-octadecadienoate + H2O. The catalysed reaction is (5Z,8Z,11Z,14Z)-eicosatetraenoate + reduced [NADPH--hemoprotein reductase] + O2 = 13-hydroxy-(5Z,8Z,11Z,14Z)-eicosatetraenoate + oxidized [NADPH--hemoprotein reductase] + H2O + H(+). It catalyses the reaction (5Z,8Z,11Z,14Z)-eicosatetraenoate + reduced [NADPH--hemoprotein reductase] + O2 = 19-hydroxy-(5Z,8Z,11Z,14Z)-eicosatetraenoate + oxidized [NADPH--hemoprotein reductase] + H2O + H(+). The enzyme catalyses (9Z,12Z)-octadecadienoate + reduced [NADPH--hemoprotein reductase] + O2 = 11-hydroxy-(9Z,12Z)-octadecadienoate + oxidized [NADPH--hemoprotein reductase] + H2O + H(+). The protein operates within cofactor metabolism; retinol metabolism. Its pathway is steroid metabolism; cholesterol metabolism. It functions in the pathway lipid metabolism; arachidonate metabolism. In terms of biological role, a cytochrome P450 monooxygenase involved in the metabolism of various endogenous substrates, including fatty acids, steroid hormones and vitamins. Mechanistically, uses molecular oxygen inserting one oxygen atom into a substrate, and reducing the second into a water molecule, with two electrons provided by NADPH via cytochrome P450 reductase (NADPH--hemoprotein reductase). Catalyzes the hydroxylation of carbon-hydrogen bonds. Exhibits high catalytic activity for the formation of hydroxyestrogens from estrone (E1) and 17beta-estradiol (E2), namely 2-hydroxy E1 and E2. Metabolizes cholesterol toward 25-hydroxycholesterol, a physiological regulator of cellular cholesterol homeostasis. May act as a major enzyme for all-trans retinoic acid biosynthesis in the liver. Catalyzes two successive oxidative transformation of all-trans retinol to all-trans retinal and then to the active form all-trans retinoic acid. Primarily catalyzes stereoselective epoxidation of the last double bond of polyunsaturated fatty acids (PUFA), displaying a strong preference for the (R,S) stereoisomer. Catalyzes bisallylic hydroxylation and omega-1 hydroxylation of PUFA. May also participate in eicosanoids metabolism by converting hydroperoxide species into oxo metabolites (lipoxygenase-like reaction, NADPH-independent). Plays a role in the oxidative metabolism of xenobiotics. Catalyzes the N-hydroxylation of heterocyclic amines and the O-deethylation of phenacetin. Metabolizes caffeine via N3-demethylation. The polypeptide is Cytochrome P450 1A2 (Homo sapiens (Human)).